Here is a 158-residue protein sequence, read N- to C-terminus: MTLFNLTDLASTLPRNARLIGLDPGSKIIGIALSDVGRRLATPYGAMKRGKLAEAAATILDIARKEGAAALIIGLPLSMDGSIGPAAQAARDWAHAIARETGLPVAMMDERLSSAAVNRALIEADVTRAKRAGRVDAAAASYMLQGALDLLNEPRPEE.

This sequence belongs to the YqgF nuclease family.

It is found in the cytoplasm. In terms of biological role, could be a nuclease involved in processing of the 5'-end of pre-16S rRNA. This chain is Putative pre-16S rRNA nuclease, found in Acidiphilium cryptum (strain JF-5).